Reading from the N-terminus, the 82-residue chain is Endocuticle structural glycoprotein ABD-5 (82 aa).

Glutamine 1 is subject to Pyrrolidone carboxylic acid. The region spanning 18 to 82 is the Chitin-binding type R&amp;R domain; sequence LGQYNFAYRT…ENGYQPRVQS (65 aa).

Functionally, component of the soft endocuticle of migratory locust. The polypeptide is Endocuticle structural glycoprotein ABD-5 (Locusta migratoria (Migratory locust)).